A 101-amino-acid chain; its full sequence is Ubiquitin-related modifier 1 (101 aa).

Gly101 bears the 1-thioglycine mark. Gly101 is covalently cross-linked (Glycyl lysine isopeptide (Gly-Lys) (interchain with K-? in acceptor proteins)).

This sequence belongs to the URM1 family. Component of a complex at least composed of URM1, CTU2/NCS2 and CTU1/ATPBD3. Post-translationally, C-terminal thiocarboxylation occurs in 2 steps, it is first acyl-adenylated (-COAMP) via the hesA/moeB/thiF part of MOCS3, then thiocarboxylated (-COSH) via the rhodanese domain of MOCS3.

Its subcellular location is the cytoplasm. It participates in tRNA modification; 5-methoxycarbonylmethyl-2-thiouridine-tRNA biosynthesis. In terms of biological role, acts as a sulfur carrier required for 2-thiolation of mcm(5)S(2)U at tRNA wobble positions of cytosolic tRNA(Lys), tRNA(Glu) and tRNA(Gln). Serves as sulfur donor in tRNA 2-thiolation reaction by being thiocarboxylated (-COSH) at its C-terminus by MOCS3. The sulfur is then transferred to tRNA to form 2-thiolation of mcm(5)S(2)U. Also acts as a ubiquitin-like protein (UBL) that is covalently conjugated via an isopeptide bond to lysine residues of target proteins such as MOCS3, ATPBD3, CTU2, USP15 and CAS. The thiocarboxylated form serves as substrate for conjugation and oxidative stress specifically induces the formation of UBL-protein conjugates. This Bos taurus (Bovine) protein is Ubiquitin-related modifier 1.